Reading from the N-terminus, the 562-residue chain is Arginine--tRNA ligase (562 aa).

Positions 129–139 (ANPTGPLHVGH) match the 'HIGH' region motif.

It belongs to the class-I aminoacyl-tRNA synthetase family. In terms of assembly, monomer.

It localises to the cytoplasm. It carries out the reaction tRNA(Arg) + L-arginine + ATP = L-arginyl-tRNA(Arg) + AMP + diphosphate. The polypeptide is Arginine--tRNA ligase (argS) (Xylella fastidiosa (strain 9a5c)).